We begin with the raw amino-acid sequence, 917 residues long: Chitin synthase 1 (917 aa).

Positions 1-11 (MAYHGRGDGYD) are enriched in basic and acidic residues. The interval 1–56 (MAYHGRGDGYDGHQLQDLPGGHNQGDQHDDAQAPFLSENPMPYDNDRLGTDTPPVR) is disordered. The Extracellular portion of the chain corresponds to 1–570 (MAYHGRGDGY…YKSGHNIVRM (570 aa)). N-linked (GlcNAc...) asparagine glycosylation is present at N544. The helical transmembrane segment at 571 to 591 (FFFHVQLIYNIANVIFTWFSL) threads the bilayer. At 592 to 629 (ASYWLTTTVIMDLVGTPVTASSSSAEHHGWPFGDTVTP) the chain is on the cytoplasmic side. Residues 630-650 (FFNAVLKYIYLAFVILQFILA) traverse the membrane as a helical segment. The Extracellular segment spans residues 651–664 (LGNRPKGSKWTYIT). The helical transmembrane segment at 665–685 (SFFVFSLIQSYILVLSGYLVA) threads the bilayer. Over 686-716 (RAFSVPLDQQLQLDNAKDAMASLFGGSGSAG) the chain is Cytoplasmic. The chain crosses the membrane as a helical span at residues 717–737 (VILVALVTIYGLYFLASFMYL). Over 738–744 (DPWHMFH) the chain is Extracellular. The helical transmembrane segment at 745-765 (SFPYYMLLMSTYINILMIYAF) threads the bilayer. Over 766 to 843 (NNWHDVSWGT…DLEDSYKSFR (78 aa)) the chain is Cytoplasmic. A helical transmembrane segment spans residues 844-864 (TMLVVSWLFSNCLLAVVITSD). Residues 865-884 (NFNTFGIGQTASARTAWFFK) are Extracellular-facing. A helical membrane pass occupies residues 885 to 905 (FLLFATGALSVIRFIGFCWFL). Topologically, residues 906 to 917 (GRTGIMCCFARR) are cytoplasmic.

It belongs to the chitin synthase family. Class III subfamily.

Its subcellular location is the cell membrane. It carries out the reaction [(1-&gt;4)-N-acetyl-beta-D-glucosaminyl](n) + UDP-N-acetyl-alpha-D-glucosamine = [(1-&gt;4)-N-acetyl-beta-D-glucosaminyl](n+1) + UDP + H(+). In terms of biological role, polymerizes chitin, a structural polymer of the cell wall and septum, by transferring the sugar moiety of UDP-GlcNAc to the non-reducing end of the growing chitin polymer. The protein is Chitin synthase 1 (chs-1) of Neurospora crassa (strain ATCC 24698 / 74-OR23-1A / CBS 708.71 / DSM 1257 / FGSC 987).